The primary structure comprises 484 residues: Secreted RxLR effector protein 104 (484 aa).

A signal peptide spans 1 to 24; it reads MRSAYPVLTALLVVASSQIAAGSG. The RxLR-dEER signature appears at 48 to 65; it reads RFLRGSRDVHNNVANEER. Asn175 carries an N-linked (GlcNAc...) asparagine glycan. The disordered stretch occupies residues 324–463; the sequence is ENPKGQSPYP…SSSVLTPEDV (140 aa). Residues 327–346 are compositionally biased toward polar residues; sequence KGQSPYPSTPLTAASTSKGG. Low complexity predominate over residues 402–413; it reads SSSSGPSRAFAP. Positions 418 to 428 are enriched in polar residues; the sequence is DQTFITENSRL.

It belongs to the RxLR effector family.

It localises to the secreted. Its subcellular location is the host nucleus. Secreted effector that completely suppresses the host cell death induced by cell death-inducing proteins. The chain is Secreted RxLR effector protein 104 from Plasmopara viticola (Downy mildew of grapevine).